Reading from the N-terminus, the 253-residue chain is Tryptophan synthase alpha chain (253 aa).

Residues glutamate 45 and aspartate 56 each act as proton acceptor in the active site.

The protein belongs to the TrpA family. As to quaternary structure, tetramer of two alpha and two beta chains.

It carries out the reaction (1S,2R)-1-C-(indol-3-yl)glycerol 3-phosphate + L-serine = D-glyceraldehyde 3-phosphate + L-tryptophan + H2O. The protein operates within amino-acid biosynthesis; L-tryptophan biosynthesis; L-tryptophan from chorismate: step 5/5. In terms of biological role, the alpha subunit is responsible for the aldol cleavage of indoleglycerol phosphate to indole and glyceraldehyde 3-phosphate. This Flavobacterium johnsoniae (strain ATCC 17061 / DSM 2064 / JCM 8514 / BCRC 14874 / CCUG 350202 / NBRC 14942 / NCIMB 11054 / UW101) (Cytophaga johnsonae) protein is Tryptophan synthase alpha chain.